We begin with the raw amino-acid sequence, 484 residues long: MARTIMLQGTGSDVGKTVLVAGLCRLAANAGLTVRPFKPQNMSNNAAVADDGGEIGRAQWLQSMAARTPSSVHMNPVLLKPQSENGSQIIVQGRVFGQAKGRDYQRLKPQLLGAVLESFENVCAGADLVVVEGAGSPAEINLRTGDIANMGFATKAGVPVVLVGDINRGGVIASLVGTQAILDEGDRAMIAGYLINKFRGDVSLFDDGIRAIEGFTGWPCFGVVPWLQAATRLPAEDSVVLERLARSGTGALKIAVPMLPRIANFDDLDPLRAEADVELVFVRGGERLPADASLVILPGSKSTISDLADLRVQGWDRDLAAHVRRGGRVIGICGGYQMLGRTVRDPLGIEGGRIEAAGLALLDVETEMAPEKTVRNSQARSSEYDVSLAGYQIHLGVTRGPDCVRPSAIIDGAPDGALSADGRIMGTYLHGLFGSDAYRARLLQSFGLSGERRNYRDSVEQALDEIAGELERHLDPHWLAGLLG.

The region spanning 251-438 (ALKIAVPMLP…LHGLFGSDAY (188 aa)) is the GATase cobBQ-type domain. The Nucleophile role is filled by C333. Residue H430 is part of the active site.

The protein belongs to the CobB/CobQ family. CobQ subfamily.

The protein operates within cofactor biosynthesis; adenosylcobalamin biosynthesis. Catalyzes amidations at positions B, D, E, and G on adenosylcobyrinic A,C-diamide. NH(2) groups are provided by glutamine, and one molecule of ATP is hydrogenolyzed for each amidation. The protein is Cobyric acid synthase of Rhizobium etli (strain ATCC 51251 / DSM 11541 / JCM 21823 / NBRC 15573 / CFN 42).